Reading from the N-terminus, the 237-residue chain is Ergosterol biosynthesis protein 29 (237 aa).

A helical membrane pass occupies residues 36–56; the sequence is ITLFLIVVGTLAFFNELYITI.

It localises to the endoplasmic reticulum membrane. Its function is as follows. Part of the third module of ergosterol biosynthesis pathway that includes the late steps of the pathway. ERG29 regulates the activity of the iron-containing C4-methylsterol oxidase ERG25. The third module or late pathway involves the ergosterol synthesis itself through consecutive reactions that mainly occur in the endoplasmic reticulum (ER) membrane. Firstly, the squalene synthase ERG9 catalyzes the condensation of 2 farnesyl pyrophosphate moieties to form squalene, which is the precursor of all steroids. Squalene synthase is crucial for balancing the incorporation of farnesyl diphosphate (FPP) into sterol and nonsterol isoprene synthesis. Secondly, the squalene epoxidase ERG1 catalyzes the stereospecific oxidation of squalene to (S)-2,3-epoxysqualene, which is considered to be a rate-limiting enzyme in steroid biosynthesis. Then, the lanosterol synthase ERG7 catalyzes the cyclization of (S)-2,3 oxidosqualene to lanosterol, a reaction that forms the sterol core. In the next steps, lanosterol is transformed to zymosterol through a complex process involving various demethylation, reduction and desaturation reactions. The lanosterol 14-alpha-demethylase ERG11 (also known as CYP51) catalyzes C14-demethylation of lanosterol to produce 4,4'-dimethyl cholesta-8,14,24-triene-3-beta-ol, which is critical for ergosterol biosynthesis. The C-14 reductase ERG24 reduces the C14=C15 double bond of 4,4-dimethyl-cholesta-8,14,24-trienol to produce 4,4-dimethyl-cholesta-8,24-dienol. 4,4-dimethyl-cholesta-8,24-dienol is substrate of the C-4 demethylation complex ERG25-ERG26-ERG27 in which ERG25 catalyzes the three-step monooxygenation required for the demethylation of 4,4-dimethyl and 4alpha-methylsterols, ERG26 catalyzes the oxidative decarboxylation that results in a reduction of the 3-beta-hydroxy group at the C-3 carbon to an oxo group, and ERG27 is responsible for the reduction of the keto group on the C-3. ERG28 has a role as a scaffold to help anchor ERG25, ERG26 and ERG27 to the endoplasmic reticulum and ERG29 regulates the activity of the iron-containing C4-methylsterol oxidase ERG25. Then, the sterol 24-C-methyltransferase ERG6 catalyzes the methyl transfer from S-adenosyl-methionine to the C-24 of zymosterol to form fecosterol. The C-8 sterol isomerase ERG2 catalyzes the reaction which results in unsaturation at C-7 in the B ring of sterols and thus converts fecosterol to episterol. The sterol-C5-desaturase ERG3 then catalyzes the introduction of a C-5 double bond in the B ring to produce 5-dehydroepisterol. The C-22 sterol desaturase ERG5 further converts 5-dehydroepisterol into ergosta-5,7,22,24(28)-tetraen-3beta-ol by forming the C-22(23) double bond in the sterol side chain. Finally, ergosta-5,7,22,24(28)-tetraen-3beta-ol is substrate of the C-24(28) sterol reductase ERG4 to produce ergosterol. Plays a role in maintaining mitochondrial and plasma membrane integrity and consequently impacting the iron homeostasis, respiratory metabolism and antioxidant response. The protein is Ergosterol biosynthesis protein 29 of Saccharomyces cerevisiae (strain ATCC 204508 / S288c) (Baker's yeast).